A 451-amino-acid chain; its full sequence is uncharacterized protein (451 aa).

5 consecutive transmembrane segments (helical) span residues 11–31 (VLLKLIQILFFTISISIYIDL), 56–76 (IQIYYWFVGIILFSIAWSIGT), 151–171 (IIGIQSCLIIFFSTLGFNIYL), 175–195 (FWLIKTIIVDWIISAILLIIF), and 207–227 (VYSVISYIFGSNVLGFGTIKI). The interval 250–300 (TKSNNNNNNNNNNKQDDNIIYDTDSSFNGQSSSSSSSSSSSSSSSSSATTT) is disordered. Composition is skewed to low complexity over residues 253-262 (NNNNNNNNNN) and 280-300 (SSSSSSSSSSSSSSSSSATTT). Transmembrane regions (helical) follow at residues 392 to 412 (FVGVIILWVYTISNFIISDYS) and 413 to 433 (LLTIPNILVVVGFSGTILTYL).

The protein localises to the membrane. This is an uncharacterized protein from Dictyostelium discoideum (Social amoeba).